The primary structure comprises 630 residues: 1-deoxy-D-xylulose-5-phosphate synthase (630 aa).

Thiamine diphosphate contacts are provided by residues His80 and Gly121–Ser123. Mg(2+) is bound at residue Asp152. Residues Gly153 to Ala154, Asn181, Tyr288, and Glu370 each bind thiamine diphosphate. Residue Asn181 participates in Mg(2+) binding.

The protein belongs to the transketolase family. DXPS subfamily. In terms of assembly, homodimer. The cofactor is Mg(2+). It depends on thiamine diphosphate as a cofactor.

It catalyses the reaction D-glyceraldehyde 3-phosphate + pyruvate + H(+) = 1-deoxy-D-xylulose 5-phosphate + CO2. It functions in the pathway metabolic intermediate biosynthesis; 1-deoxy-D-xylulose 5-phosphate biosynthesis; 1-deoxy-D-xylulose 5-phosphate from D-glyceraldehyde 3-phosphate and pyruvate: step 1/1. Catalyzes the acyloin condensation reaction between C atoms 2 and 3 of pyruvate and glyceraldehyde 3-phosphate to yield 1-deoxy-D-xylulose-5-phosphate (DXP). The chain is 1-deoxy-D-xylulose-5-phosphate synthase from Colwellia psychrerythraea (strain 34H / ATCC BAA-681) (Vibrio psychroerythus).